Here is a 221-residue protein sequence, read N- to C-terminus: Protein LURP-one-related 17 (221 aa).

The segment at 1–20 is disordered; sequence MFPFLKQRSRSVHGEDAPSS.

This sequence belongs to the LOR family.

Might be related to the phospholipid scramblase and tubby-like superfamily of membrane tethered transcription factors. The sequence is that of Protein LURP-one-related 17 from Arabidopsis thaliana (Mouse-ear cress).